We begin with the raw amino-acid sequence, 335 residues long: 3-ketodihydrosphingosine reductase TSC10 (335 aa).

Residues G42, S44, S45, G46, R67, D68, K71, D95, and L96 each coordinate NADPH. A GXSXG motif is present at residues G42 to G46. Positions L141–E207 are involved in homodimer formation. The active-site Proton acceptor is Y190. Y190, K194, and I223 together coordinate NADP(+). K194 serves as the catalytic Lowers pKa of active site Tyr. Residues T288–W308 traverse the membrane as a helical segment.

This sequence belongs to the short-chain dehydrogenases/reductases (SDR) family. As to quaternary structure, homodimer; a minor portion forms homotetramers.

It is found in the endoplasmic reticulum membrane. It carries out the reaction sphinganine + NADP(+) = 3-oxosphinganine + NADPH + H(+). The protein operates within lipid metabolism; sphingolipid metabolism. Functionally, catalyzes the reduction of 3'-oxosphinganine (3-ketodihydrosphingosine/KDS) to sphinganine (dihydrosphingosine/DHS), the second step of de novo sphingolipid biosynthesis. This chain is 3-ketodihydrosphingosine reductase TSC10 (TSC10), found in Cryptococcus neoformans var. neoformans serotype D (strain JEC21 / ATCC MYA-565) (Filobasidiella neoformans).